Here is a 276-residue protein sequence, read N- to C-terminus: tRNA dimethylallyltransferase (276 aa).

The tract at residues 9–12 is interaction with substrate tRNA; sequence DSLS.

Belongs to the IPP transferase family. As to quaternary structure, monomer. Requires Mg(2+) as cofactor.

The enzyme catalyses adenosine(37) in tRNA + dimethylallyl diphosphate = N(6)-dimethylallyladenosine(37) in tRNA + diphosphate. Functionally, catalyzes the transfer of a dimethylallyl group onto the adenine at position 37 in tRNAs that read codons beginning with uridine, leading to the formation of N6-(dimethylallyl)adenosine (i(6)A). The sequence is that of tRNA dimethylallyltransferase (miaA) from Helicobacter pylori (strain G27).